A 263-amino-acid polypeptide reads, in one-letter code: NADH dehydrogenase [ubiquinone] iron-sulfur protein 3, mitochondrial (263 aa).

Residues 1–35 (MVAAVARLWWRGLLGASALTRGAGRPSVLLLPVRR) constitute a mitochondrion transit peptide.

This sequence belongs to the complex I 30 kDa subunit family. As to quaternary structure, core subunit of respiratory chain NADH dehydrogenase (Complex I) which is composed of 45 different subunits. Interacts with NDUFAF3. Interacts with RAB5IF. Found in subcomplexes containing subunits NDUFS2, MT-ND1 and NDUFA13.

It is found in the mitochondrion inner membrane. It carries out the reaction a ubiquinone + NADH + 5 H(+)(in) = a ubiquinol + NAD(+) + 4 H(+)(out). In terms of biological role, core subunit of the mitochondrial membrane respiratory chain NADH dehydrogenase (Complex I) which catalyzes electron transfer from NADH through the respiratory chain, using ubiquinone as an electron acceptor. Essential for the catalytic activity and assembly of complex I. The sequence is that of NADH dehydrogenase [ubiquinone] iron-sulfur protein 3, mitochondrial (NDUFS3) from Gorilla gorilla gorilla (Western lowland gorilla).